A 61-amino-acid polypeptide reads, in one-letter code: Venom protein 22.1 (61 aa).

Residues 1-18 (MDIKGLLVILFFVLLITG) form the signal peptide.

The protein belongs to the non-disulfide-bridged peptide (NDBP) superfamily. Long chain multifunctional peptide (group 2) family. Expressed by the venom gland.

Its subcellular location is the secreted. This chain is Venom protein 22.1, found in Lychas mucronatus (Chinese swimming scorpion).